The chain runs to 84 residues: MKVVLIVCLVWVMAMMELVSCECWSQADCSVGHCCAGSSFSKNCRPYGGDGEQCEPRNKYEVYSTGCPCEENLMCSVINRCQSA.

Positions 1-21 (MKVVLIVCLVWVMAMMELVSC) are cleaved as a signal peptide. 5 disulfides stabilise this stretch: Cys23-Cys35, Cys29-Cys44, Cys34-Cys67, Cys54-Cys75, and Cys69-Cys81.

This sequence belongs to the AVIT (prokineticin) family. In terms of tissue distribution, expressed by the venom gland.

The protein localises to the secreted. This is U8-theraphotoxin-Hhn1d from Cyriopagopus hainanus (Chinese bird spider).